Consider the following 572-residue polypeptide: ATP-dependent lipid A-core flippase (572 aa).

A run of 5 helical transmembrane segments spans residues 14–34 (IIPYKIPLFIAMFAMIVVAAL), 55–75 (VFFLQILPLIIIAIFFTKGVL), 148–168 (IFLLGVIFYMNWKLALICFLI), 249–269 (MEIIGGFAVAGIIWVGGSEVI), and 272–292 (SATPGTFFAFLTAMITAYDPV). The region spanning 22-304 (FIAMFAMIVV…VSQVNSTIQQ (283 aa)) is the ABC transmembrane type-1 domain. The ABC transporter domain occupies 338 to 571 (IEFHDVSFSY…EGEYQLLYNM (234 aa)). 370-377 (GPSGGGKT) contacts ATP.

It belongs to the ABC transporter superfamily. Lipid exporter (TC 3.A.1.106) family. As to quaternary structure, homodimer.

It is found in the cell inner membrane. The catalysed reaction is ATP + H2O + lipid A-core oligosaccharideSide 1 = ADP + phosphate + lipid A-core oligosaccharideSide 2.. Involved in lipopolysaccharide (LPS) biosynthesis. Translocates lipid A-core from the inner to the outer leaflet of the inner membrane. Transmembrane domains (TMD) form a pore in the inner membrane and the ATP-binding domain (NBD) is responsible for energy generation. The chain is ATP-dependent lipid A-core flippase from Desulfotalea psychrophila (strain LSv54 / DSM 12343).